A 386-amino-acid polypeptide reads, in one-letter code: 1-deoxy-D-xylulose 5-phosphate reductoisomerase (386 aa).

NADPH contacts are provided by Thr-10, Gly-11, Ser-12, Ile-13, Gly-36, Asn-38, and Asn-122. Lys-123 serves as a coordination point for 1-deoxy-D-xylulose 5-phosphate. Glu-124 provides a ligand contact to NADPH. Asp-148 is a Mn(2+) binding site. Residues Ser-149, Glu-150, Ser-174, and His-197 each contribute to the 1-deoxy-D-xylulose 5-phosphate site. A Mn(2+)-binding site is contributed by Glu-150. Gly-203 is a binding site for NADPH. Ser-210, Asn-215, Lys-216, and Glu-219 together coordinate 1-deoxy-D-xylulose 5-phosphate. Mn(2+) is bound at residue Glu-219.

This sequence belongs to the DXR family. It depends on Mg(2+) as a cofactor. The cofactor is Mn(2+).

The enzyme catalyses 2-C-methyl-D-erythritol 4-phosphate + NADP(+) = 1-deoxy-D-xylulose 5-phosphate + NADPH + H(+). Its pathway is isoprenoid biosynthesis; isopentenyl diphosphate biosynthesis via DXP pathway; isopentenyl diphosphate from 1-deoxy-D-xylulose 5-phosphate: step 1/6. In terms of biological role, catalyzes the NADPH-dependent rearrangement and reduction of 1-deoxy-D-xylulose-5-phosphate (DXP) to 2-C-methyl-D-erythritol 4-phosphate (MEP). This chain is 1-deoxy-D-xylulose 5-phosphate reductoisomerase, found in Geotalea uraniireducens (strain Rf4) (Geobacter uraniireducens).